We begin with the raw amino-acid sequence, 152 residues long: Aspartate 1-decarboxylase (152 aa).

S24 (schiff-base intermediate with substrate; via pyruvic acid) is an active-site residue. S24 carries the post-translational modification Pyruvic acid (Ser). T56 provides a ligand contact to substrate. Residue Y57 is the Proton donor of the active site. 72-74 lines the substrate pocket; the sequence is GAA.

It belongs to the PanD family. Heterooctamer of four alpha and four beta subunits. It depends on pyruvate as a cofactor. Is synthesized initially as an inactive proenzyme, which is activated by self-cleavage at a specific serine bond to produce a beta-subunit with a hydroxyl group at its C-terminus and an alpha-subunit with a pyruvoyl group at its N-terminus.

It localises to the cytoplasm. It catalyses the reaction L-aspartate + H(+) = beta-alanine + CO2. It participates in cofactor biosynthesis; (R)-pantothenate biosynthesis; beta-alanine from L-aspartate: step 1/1. Functionally, catalyzes the pyruvoyl-dependent decarboxylation of aspartate to produce beta-alanine. This Rhodospirillum centenum (strain ATCC 51521 / SW) protein is Aspartate 1-decarboxylase.